The chain runs to 281 residues: Ribulose-5-phosphate-3-epimerase, chloroplastic (281 aa).

The N-terminal 45 residues, 1 to 45, are a transit peptide targeting the chloroplast; the sequence is MSTSAASLCCSSTQVNGFGLRPERSLLYQPTSFSFSRRRTHGIVK. Serine 63 contributes to the substrate binding site. Positions 88, 90, and 121 each coordinate a divalent metal cation. Aspartate 90 functions as the Proton acceptor in the catalytic mechanism. Substrate contacts are provided by residues histidine 121, 199–202, 232–234, and 254–256; these read GFGG, DGG, and GSA. Aspartate 232 is a binding site for a divalent metal cation. Aspartate 232 serves as the catalytic Proton donor.

It belongs to the ribulose-phosphate 3-epimerase family. As to quaternary structure, homooctamer. It depends on Co(2+) as a cofactor. Fe(2+) serves as cofactor. Mn(2+) is required as a cofactor. The cofactor is Zn(2+). Present in roots, seeds and flowers. Accumulates in nematode feeding sites (NFS).

The protein resides in the plastid. It localises to the chloroplast thylakoid membrane. It carries out the reaction D-ribulose 5-phosphate = D-xylulose 5-phosphate. The protein operates within carbohydrate biosynthesis; Calvin cycle. In terms of biological role, essential protein required during embryogenesis. Catalyzes the reversible epimerization of D-ribulose 5-phosphate to D-xylulose 5-phosphate. Essential for the early steps of nematode feeding sites (NFS, multinucleated root cells) formation induced by the root-knot nematodes Heterodera schachtii, Meloidogyne incognita, M.javanica and M.hapla. The chain is Ribulose-5-phosphate-3-epimerase, chloroplastic from Arabidopsis thaliana (Mouse-ear cress).